A 142-amino-acid polypeptide reads, in one-letter code: Putative transmembrane protein INAFM1 (142 aa).

Positions 1–19 are enriched in gly residues; that stretch reads MRGTSCVGGGAESPGGAGL. The segment at 1 to 22 is disordered; the sequence is MRGTSCVGGGAESPGGAGLSEG. The helical transmembrane segment at 36–56 threads the bilayer; sequence YFLCVSLAAVLLAVYYGLIWV. Disordered regions lie at residues 61-83 and 99-142; these read PAAP…PGVP and VPGG…RRPG. The segment covering 64 to 83 has biased composition (pro residues); sequence PAGPQPSAPSPPCAARPGVP. The span at 99 to 111 shows a compositional bias: low complexity; the sequence is VPGGPRPQLQLPL. Over residues 117–142 the composition is skewed to basic and acidic residues; it reads YSDPDRRPSRQTPRETPEAAEGRRPG.

Its subcellular location is the membrane. The sequence is that of Putative transmembrane protein INAFM1 from Homo sapiens (Human).